A 413-amino-acid polypeptide reads, in one-letter code: Gamma-glutamyl phosphate reductase (413 aa).

Belongs to the gamma-glutamyl phosphate reductase family.

It is found in the cytoplasm. It carries out the reaction L-glutamate 5-semialdehyde + phosphate + NADP(+) = L-glutamyl 5-phosphate + NADPH + H(+). Its pathway is amino-acid biosynthesis; L-proline biosynthesis; L-glutamate 5-semialdehyde from L-glutamate: step 2/2. In terms of biological role, catalyzes the NADPH-dependent reduction of L-glutamate 5-phosphate into L-glutamate 5-semialdehyde and phosphate. The product spontaneously undergoes cyclization to form 1-pyrroline-5-carboxylate. In Salinispora arenicola (strain CNS-205), this protein is Gamma-glutamyl phosphate reductase.